The following is a 106-amino-acid chain: Isocitrate dehydrogenase [NAD] subunit gamma, mitochondrial (106 aa).

The protein belongs to the isocitrate and isopropylmalate dehydrogenases family. As to quaternary structure, heterooligomer of subunits alpha (IDH3A), beta (IDH3B), and gamma (IDH3G) in the apparent ratio of 2:1:1. The heterodimer containing one IDH3A and one IDH3B subunit and the heterodimer containing one IDH3A and one IDH3G subunit assemble into a heterotetramer (which contains two subunits of IDH3A, one of IDH3B and one of IDH3G) and further into the heterooctamer.

Its subcellular location is the mitochondrion. The heterotetramer and the heterodimer composed of IDH3A and IDH3G subunits can be allosterically activated by citrate (CIT) or/and ADP, and the two activators can act independently or synergistically. The heterodimer composed of IDH3A and IDH3B subunits cannot be allosterically regulated and the allosteric regulation of the heterotetramer is through the IDH3G subunit and not the IDH3B subunit. The IDH3G subunit contains the allosteric site which consists of a CIT-binding site and an ADP-binding site, and the binding of CIT and ADP causes conformational changes at the allosteric site which are transmitted to the active site in the catalytic subunit (IDH3A) through a cascade of conformational changes at the heterodimer interface, leading to stabilization of the isocitrate-binding at the active site and thus activation of the enzyme. ATP can activate the heterotetramer and the heterodimer composed of IDH3A and IDH3G subunits at low concentrations but inhibits their activities at high concentrations, whereas ATP exhibits only inhibitory effect on the heterodimer composed of IDH3A and IDH3B subunits. Its function is as follows. Regulatory subunit which plays a role in the allosteric regulation of the enzyme catalyzing the decarboxylation of isocitrate (ICT) into alpha-ketoglutarate. The heterodimer composed of the alpha (IDH3A) and beta (IDH3B) subunits and the heterodimer composed of the alpha (IDH3A) and gamma (IDH3G) subunits, have considerable basal activity but the full activity of the heterotetramer (containing two subunits of IDH3A, one of IDH3B and one of IDH3G) requires the assembly and cooperative function of both heterodimers. This Sus scrofa (Pig) protein is Isocitrate dehydrogenase [NAD] subunit gamma, mitochondrial (IDH3G).